The primary structure comprises 386 residues: Methylthioribose-1-phosphate isomerase (386 aa).

Residue D255 is the Proton donor of the active site.

The protein belongs to the eIF-2B alpha/beta/delta subunits family. MtnA subfamily.

It localises to the cytoplasm. Its subcellular location is the nucleus. The enzyme catalyses 5-(methylsulfanyl)-alpha-D-ribose 1-phosphate = 5-(methylsulfanyl)-D-ribulose 1-phosphate. It participates in amino-acid biosynthesis; L-methionine biosynthesis via salvage pathway; L-methionine from S-methyl-5-thio-alpha-D-ribose 1-phosphate: step 1/6. Catalyzes the interconversion of methylthioribose-1-phosphate (MTR-1-P) into methylthioribulose-1-phosphate (MTRu-1-P). This chain is Methylthioribose-1-phosphate isomerase, found in Trypanosoma brucei brucei (strain 927/4 GUTat10.1).